The primary structure comprises 314 residues: Deoxyhypusine hydroxylase (314 aa).

M1 carries the N-acetylmethionine modification. HEAT-like PBS-type repeat units lie at residues L61–D87, V94–S120, E188–A214, L219–D245, and V252–D278. The Fe cation site is built by H63, E64, H96, and E97. Positions 221, 222, 254, and 255 each coordinate Fe cation.

Belongs to the deoxyhypusine hydroxylase family. Fe(2+) serves as cofactor.

The catalysed reaction is [eIF5A protein]-deoxyhypusine + AH2 + O2 = [eIF5A protein]-hypusine + A + H2O. It functions in the pathway protein modification; eIF5A hypusination. Its function is as follows. Catalyzes the hydroxylation of the N(6)-(4-aminobutyl)-L-lysine intermediate to form hypusine, an essential post-translational modification only found in mature eIF-5A factor. In Arabidopsis thaliana (Mouse-ear cress), this protein is Deoxyhypusine hydroxylase.